Consider the following 77-residue polypeptide: uncharacterized protein (77 aa).

The region spanning 13–67 is the HTH cro/C1-type domain; sequence VLQYMVNNDYSLNQLALEIGVSPATLSRVLNGERRPGQLVIGKMLHYFNLKFEDL. Residues 24-43 constitute a DNA-binding region (H-T-H motif); the sequence is LNQLALEIGVSPATLSRVLN.

Its subcellular location is the cytoplasm. This is an uncharacterized protein from Bacillus subtilis (strain 168).